Consider the following 198-residue polypeptide: MATTAPNLHSLSSSFAFSNPSSNVSATSFTFQIPNKKAQISCISSKKLHTQKSFNFHDAVTPMNKPSFGRDLMVAQATEAVAPTTEEAATSQPKTSKKAKKLKYPRRILDVYQILQSPIITEAAIKNIADENSLLFTVDVRADKKMIREAISNFFGVKVRKVNTLIRPDGTKKAYIMLNKEYNASELAKKIGIFPGGN.

The transit peptide at 1–76 directs the protein to the chloroplast; that stretch reads MATTAPNLHS…SFGRDLMVAQ (76 aa).

This sequence belongs to the universal ribosomal protein uL23 family. Component of the chloroplast large ribosomal subunit (LSU). Mature 70S chloroplast ribosomes of higher plants consist of a small (30S) and a large (50S) subunit. The 30S small subunit contains 1 molecule of ribosomal RNA (16S rRNA) and 24 different proteins. The 50S large subunit contains 3 rRNA molecules (23S, 5S and 4.5S rRNA) and 33 different proteins.

It is found in the plastid. The protein resides in the chloroplast. In terms of biological role, component of the chloroplast ribosome (chloro-ribosome), a dedicated translation machinery responsible for the synthesis of chloroplast genome-encoded proteins, including proteins of the transcription and translation machinery and components of the photosynthetic apparatus. In Spinacia oleracea (Spinach), this protein is Large ribosomal subunit protein uL23c (RPL23).